A 692-amino-acid chain; its full sequence is Glycogen phosphorylase (692 aa).

An N6-(pyridoxal phosphate)lysine modification is found at Lys-586.

Belongs to the glycogen phosphorylase family. The cofactor is pyridoxal 5'-phosphate.

It catalyses the reaction [(1-&gt;4)-alpha-D-glucosyl](n) + phosphate = [(1-&gt;4)-alpha-D-glucosyl](n-1) + alpha-D-glucose 1-phosphate. Phosphorylase is an important allosteric enzyme in carbohydrate metabolism. Enzymes from different sources differ in their regulatory mechanisms and in their natural substrates. However, all known phosphorylases share catalytic and structural properties. In Aquifex aeolicus (strain VF5), this protein is Glycogen phosphorylase (glgP).